A 949-amino-acid chain; its full sequence is Glycine dehydrogenase (decarboxylating) (949 aa).

At K702 the chain carries N6-(pyridoxal phosphate)lysine.

The protein belongs to the GcvP family. The glycine cleavage system is composed of four proteins: P, T, L and H. Requires pyridoxal 5'-phosphate as cofactor.

It carries out the reaction N(6)-[(R)-lipoyl]-L-lysyl-[glycine-cleavage complex H protein] + glycine + H(+) = N(6)-[(R)-S(8)-aminomethyldihydrolipoyl]-L-lysyl-[glycine-cleavage complex H protein] + CO2. Functionally, the glycine cleavage system catalyzes the degradation of glycine. The P protein binds the alpha-amino group of glycine through its pyridoxal phosphate cofactor; CO(2) is released and the remaining methylamine moiety is then transferred to the lipoamide cofactor of the H protein. In Rhodococcoides fascians (Rhodococcus fascians), this protein is Glycine dehydrogenase (decarboxylating).